A 2281-amino-acid chain; its full sequence is Protein Ycf2 (2281 aa).

1635–1642 (GSIGSGRS) contacts ATP.

Belongs to the Ycf2 family.

Its subcellular location is the plastid. It is found in the chloroplast stroma. Probable ATPase of unknown function. Its presence in a non-photosynthetic plant (Epifagus virginiana) and experiments in tobacco indicate that it has an essential function which is probably not related to photosynthesis. The polypeptide is Protein Ycf2 (Coffea arabica (Arabian coffee)).